Here is a 562-residue protein sequence, read N- to C-terminus: Matrix metalloproteinase-25 (562 aa).

Residues 1–21 form the signal peptide; the sequence is MRLRLRLLALLLLLLAPPARA. The propeptide occupies 22 to 107; that stretch reads PKPSAQDVSL…VAGLVRRRRR (86 aa). The Cysteine switch signature appears at 88–95; sequence PRCSLPDV. Residues Cys-90 and His-233 each coordinate Zn(2+). Glu-234 is a catalytic residue. 2 residues coordinate Zn(2+): His-237 and His-243. The tract at residues 278–313 is disordered; it reads LYGKAPQTPYDKPTRKPLAPPPQPPASPTHSPSFPI. The segment covering 295 to 304 has biased composition (pro residues); it reads LAPPPQPPAS. 4 Hemopexin repeats span residues 314–363, 367–412, 413–461, and 462–508; these read PDRC…WEGL, VRVV…GLPP, GEEV…EGAP, and PSPD…WLDC. A disulfide bridge links Cys-317 with Cys-508. Residues 490–526 are disordered; sequence SIKTEPDAPQPMGPNWLDCPAPSSGPRAPRPPKATPV. Ala-539 carries GPI-anchor amidated alanine lipidation. Positions 540 to 562 are cleaved as a propeptide — removed in mature form; it reads AGRWPAPIPLLLLPLLVGGVASR.

Belongs to the peptidase M10A family. Requires Zn(2+) as cofactor. Ca(2+) serves as cofactor. Post-translationally, the precursor is cleaved by a furin endopeptidase. Expressed predominantly in leukocytes, lung and spleen. Expressed also in colon carcinoma, astrocytoma and glioblastomas.

Its subcellular location is the cell membrane. It is found in the secreted. The protein localises to the extracellular space. The protein resides in the extracellular matrix. Functionally, may activate progelatinase A. This is Matrix metalloproteinase-25 (MMP25) from Homo sapiens (Human).